A 236-amino-acid chain; its full sequence is Segregation and condensation protein A (236 aa).

It belongs to the ScpA family. As to quaternary structure, component of a cohesin-like complex composed of ScpA, ScpB and the Smc homodimer, in which ScpA and ScpB bind to the head domain of Smc. The presence of the three proteins is required for the association of the complex with DNA.

It is found in the cytoplasm. Its function is as follows. Participates in chromosomal partition during cell division. May act via the formation of a condensin-like complex containing Smc and ScpB that pull DNA away from mid-cell into both cell halves. This chain is Segregation and condensation protein A, found in Streptococcus sanguinis (strain SK36).